Reading from the N-terminus, the 187-residue chain is Threonylcarbamoyl-AMP synthase (187 aa).

Residues 3 to 187 (QVLPADAAEL…ARSGTVIREG (185 aa)) enclose the YrdC-like domain.

The protein belongs to the SUA5 family. TsaC subfamily.

The protein localises to the cytoplasm. The catalysed reaction is L-threonine + hydrogencarbonate + ATP = L-threonylcarbamoyladenylate + diphosphate + H2O. In terms of biological role, required for the formation of a threonylcarbamoyl group on adenosine at position 37 (t(6)A37) in tRNAs that read codons beginning with adenine. Catalyzes the conversion of L-threonine, HCO(3)(-)/CO(2) and ATP to give threonylcarbamoyl-AMP (TC-AMP) as the acyladenylate intermediate, with the release of diphosphate. This Shewanella pealeana (strain ATCC 700345 / ANG-SQ1) protein is Threonylcarbamoyl-AMP synthase.